Here is a 316-residue protein sequence, read N- to C-terminus: Olfactory receptor 2T11 (316 aa).

At 1 to 22 (MTNTSSSDFTLLGLLVNSEAAG) the chain is on the extracellular side. Asparagine 3 carries N-linked (GlcNAc...) asparagine glycosylation. A helical membrane pass occupies residues 23–46 (IVFTVILAVFLGAVTANLVMIFLI). Residues 47–54 (QVDSRLHT) lie on the Cytoplasmic side of the membrane. A helical membrane pass occupies residues 55–76 (PMYFLLSQLSIMDTLFICTTVP). The Extracellular portion of the chain corresponds to 77–97 (KLLADMVSKEKIISFVACGIQ). Residues cysteine 94 and cysteine 186 are joined by a disulfide bond. The helical transmembrane segment at 98-117 (IFLYLTMIGSEFFLLGLMAY) threads the bilayer. Residues 118-136 (DCYVAVCNPLRYPVLMNRK) are Cytoplasmic-facing. Residues 137–155 (KCLLLAAGAWFGGSLDGFL) traverse the membrane as a helical segment. Residues 156 to 192 (LTPITMNVPYCGSRSINHFFCEIPAVLKLACADTSLY) lie on the Extracellular side of the membrane. A helical transmembrane segment spans residues 193-216 (ETLMYICCVLMLLIPISIISTSYS). Over 217–233 (LILLTIHRMPSAEGRKK) the chain is Cytoplasmic. A helical transmembrane segment spans residues 234–256 (AFTTCSSHLTVVSIFYGAAFYTY). The Extracellular segment spans residues 257–269 (VLPQSFHTPEQDK). Residues 270–289 (VVSAFYTIVTPMLNPLIYSL) traverse the membrane as a helical segment. The Cytoplasmic portion of the chain corresponds to 290–316 (RNKDVIGAFKKVFACCSSAQKVATSDA).

The protein belongs to the G-protein coupled receptor 1 family.

The protein resides in the cell membrane. Its function is as follows. Odorant receptor. The polypeptide is Olfactory receptor 2T11 (OR2T11) (Homo sapiens (Human)).